A 1003-amino-acid polypeptide reads, in one-letter code: UPF0182 protein Mkms_1433 (1003 aa).

7 helical membrane-spanning segments follow: residues 18–38 (VLIG…RFID), 63–83 (VVVF…GLAL), 114–134 (LFGF…AQSY), 176–196 (FVAT…FGGI), 211–231 (IQLV…YWLD), 260–280 (KLIL…AIVL), and 288–308 (IGVV…PLVV). Residues 902–937 (ATGPAPANLPDGQPAAQPPNGQQPAAQTPGNQAGRA) are compositionally biased toward low complexity. The disordered stretch occupies residues 902 to 979 (ATGPAPANLP…MSGLQDAQRS (78 aa)).

The protein belongs to the UPF0182 family.

It localises to the cell membrane. This is UPF0182 protein Mkms_1433 from Mycobacterium sp. (strain KMS).